The following is a 242-amino-acid chain: Probable proteasome subunit alpha type-7 (242 aa).

It belongs to the peptidase T1A family. As to quaternary structure, the 26S proteasome consists of a 20S proteasome core and two 19S regulatory subunits. The 20S proteasome core is composed of 28 subunits that are arranged in four stacked rings, resulting in a barrel-shaped structure. The two end rings are each formed by seven alpha subunits, and the two central rings are each formed by seven beta subunits. The catalytic chamber with the active sites is on the inside of the barrel.

The protein localises to the cytoplasm. It localises to the nucleus. Its function is as follows. The proteasome degrades poly-ubiquitinated proteins in the cytoplasm and in the nucleus. It is essential for the regulated turnover of proteins and for the removal of misfolded proteins. The proteasome is a multicatalytic proteinase complex that is characterized by its ability to cleave peptides with Arg, Phe, Tyr, Leu, and Glu adjacent to the leaving group at neutral or slightly basic pH. It has an ATP-dependent proteolytic activity. In Encephalitozoon cuniculi (strain GB-M1) (Microsporidian parasite), this protein is Probable proteasome subunit alpha type-7 (PRE10).